The primary structure comprises 227 residues: MKDLFLFSNLLNHSHAFVYAFHFCLVALIILIVAYIARSKMQLVPRGLQNIVEAYLEGVISMGKDTLGSEKLARKYLPLVATIGFIVFFSNVIGIIPGFESPSSSLNLTLVLALVVFIYYNFEGIRENGFFKYFGHFMGPNKFLAPIMFPVEVISHLSRVVSLSFRLFGNIKGDDLFLLAMLTLAPWFAPLPAFALLTLMAVLQTFIFMMLTYVYLAGAVAISEHEH.

5 helical membrane-spanning segments follow: residues 16–36, 79–99, 105–125, 176–196, and 202–222; these read AFVY…VAYI, LVAT…IPGF, SLNL…FEGI, LFLL…AFAL, and VLQT…AVAI.

It belongs to the ATPase A chain family. In terms of assembly, F-type ATPases have 2 components, CF(1) - the catalytic core - and CF(0) - the membrane proton channel. CF(1) has five subunits: alpha(3), beta(3), gamma(1), delta(1), epsilon(1). CF(0) has three main subunits: a(1), b(2) and c(9-12). The alpha and beta chains form an alternating ring which encloses part of the gamma chain. CF(1) is attached to CF(0) by a central stalk formed by the gamma and epsilon chains, while a peripheral stalk is formed by the delta and b chains.

The protein localises to the cell inner membrane. Key component of the proton channel; it plays a direct role in the translocation of protons across the membrane. This is ATP synthase subunit a from Campylobacter concisus (strain 13826).